A 101-amino-acid polypeptide reads, in one-letter code: Small ribosomal subunit protein uS14 (101 aa).

It belongs to the universal ribosomal protein uS14 family. Part of the 30S ribosomal subunit. Contacts proteins S3 and S10.

Functionally, binds 16S rRNA, required for the assembly of 30S particles and may also be responsible for determining the conformation of the 16S rRNA at the A site. The protein is Small ribosomal subunit protein uS14 of Beijerinckia indica subsp. indica (strain ATCC 9039 / DSM 1715 / NCIMB 8712).